The sequence spans 470 residues: FK506-binding protein 4 (470 aa).

Disordered stretches follow at residues 40 to 101 (DEEP…KEKA), 114 to 163 (EEAM…GLEL), and 210 to 358 (PIDP…QTTG). 4 stretches are compositionally biased toward acidic residues: residues 68–91 (DLEDDSDDDYEDVDSDEESDDEEP), 115–131 (EAMDEDDEDEDEDEDGE), 150–163 (DSDEDDEEDEGLEL), and 218–254 (EDEDEEDEDDYDLSPDEDELALDLMGDDDNESDELDG). 2 stretches are compositionally biased toward basic and acidic residues: residues 268–291 (EPPKLVDTKGKNKRSAPADEEKPA) and 319–332 (EQKKEAKEGKEAKK). One can recognise a PPIase FKBP-type domain in the interval 384–470 (GNTVAMRYIG…IFDVKLLEIK (87 aa)).

This sequence belongs to the FKBP-type PPIase family. FKBP3/4 subfamily. In terms of assembly, binds to histones H3 and H4.

Its subcellular location is the nucleus. It catalyses the reaction [protein]-peptidylproline (omega=180) = [protein]-peptidylproline (omega=0). Its activity is regulated as follows. Inhibited by both FK506 and rapamycin. PPIase that acts as a histone chaperone. Histone proline isomerase that increases the rate of cis-trans isomerization at prolines on the histone H3 N-terminal tail. Proline isomerization influences H3 methylation thereby regulating gene expression. In Aspergillus oryzae (strain ATCC 42149 / RIB 40) (Yellow koji mold), this protein is FK506-binding protein 4 (fpr4).